The primary structure comprises 714 residues: GATA zinc finger domain-containing protein 10 (714 aa).

Disordered stretches follow at residues 28 to 97 (YIQQ…NKQI), 115 to 180 (TMPH…QQQQ), 266 to 362 (MPMN…QQQQ), 394 to 419 (QQQQQQPQYHNGMPHHMQQHSPESMD), 454 to 476 (MHLQQQQQNQQNQQIQQQHQQIQ), and 528 to 621 (IQQQ…RRRT). Low complexity-rich tracts occupy residues 30 to 94 (QQQQ…NNNN) and 130 to 147 (QQQQQQQQQHYQQQQHPH). Basic residues predominate over residues 148–168 (QQQHPHQQQHPHQQQHPHQQQ). A compositionally biased stretch (low complexity) spans 169-180 (HPHQQQIQQQQQ). Residues 271–282 (GGNSRKNSFDMY) are compositionally biased toward polar residues. 2 stretches are compositionally biased toward low complexity: residues 283 to 322 (NNNNNNNNNNNINNNNNNNNNNNINNNNNNNNNNNNNNNI) and 340 to 362 (QHQQQHQQQQHQQQHQQQHQQQQ). Composition is skewed to low complexity over residues 457–476 (QQQQQNQQNQQIQQQHQQIQ) and 528–549 (IQQQQQSIAKQQMPQQQNTPNN). A compositionally biased stretch (polar residues) spans 550–569 (GSPSSSDGKSPVNSNTAITS). Positions 570–588 (NNNNNNNNNNNNNNNNNNN) are enriched in low complexity. A GATA-type zinc finger spans residues 631–656 (CHYCEVTETPEWRRGPDGDHTLCNAC). Residues 661–694 (AKSQKKLAREKELEKQKELEREKERENTRKHSID) adopt a coiled-coil conformation. Over residues 667–693 (LAREKELEKQKELEREKERENTRKHSI) the composition is skewed to basic and acidic residues. Residues 667-714 (LAREKELEKQKELEREKERENTRKHSIDFMLMNDTSSAPTNSQNPTPN) are disordered. Residues 699–714 (NDTSSAPTNSQNPTPN) are compositionally biased toward polar residues.

This Dictyostelium discoideum (Social amoeba) protein is GATA zinc finger domain-containing protein 10 (gtaJ).